Reading from the N-terminus, the 102-residue chain is C-X-C motif chemokine 10 (102 aa).

A signal peptide spans 1–19 (MNKSGFLIFCLILLTLSQG). A Citrulline modification is found at Arg-24. Intrachain disulfides connect Cys-28-Cys-55 and Cys-30-Cys-72.

Belongs to the intercrine alpha (chemokine CxC) family. As to quaternary structure, monomer, dimer, and tetramer. Interacts with CXCR3 (via N-terminus).

It is found in the secreted. Pro-inflammatory cytokine that is involved in a wide variety of processes such as chemotaxis, differentiation, and activation of peripheral immune cells, regulation of cell growth, apoptosis and modulation of angiostatic effects. Plays thereby an important role during viral infections by stimulating the activation and migration of immune cells to the infected sites. Mechanistically, binding of CXCL10 to the CXCR3 receptor activates G protein-mediated signaling and results in downstream activation of phospholipase C-dependent pathway, an increase in intracellular calcium production and actin reorganization. In turn, recruitment of activated Th1 lymphocytes occurs at sites of inflammation. Activation of the CXCL10/CXCR3 axis also plays an important role in neurons in response to brain injury for activating microglia, the resident macrophage population of the central nervous system, and directing them to the lesion site. This recruitment is an essential element for neuronal reorganization. In Bos taurus (Bovine), this protein is C-X-C motif chemokine 10 (CXCL10).